Reading from the N-terminus, the 212-residue chain is Tubulin alpha chain (212 aa).

2 residues coordinate GTP: Asn3 and Asn25. Glu51 is an active-site residue.

It belongs to the tubulin family. Dimer of alpha and beta chains. A typical microtubule is a hollow water-filled tube with an outer diameter of 25 nm and an inner diameter of 15 nM. Alpha-beta heterodimers associate head-to-tail to form protofilaments running lengthwise along the microtubule wall with the beta-tubulin subunit facing the microtubule plus end conferring a structural polarity. Microtubules usually have 13 protofilaments but different protofilament numbers can be found in some organisms and specialized cells. Mg(2+) serves as cofactor.

It localises to the cytoplasm. It is found in the cytoskeleton. It carries out the reaction GTP + H2O = GDP + phosphate + H(+). Its function is as follows. Tubulin is the major constituent of microtubules, a cylinder consisting of laterally associated linear protofilaments composed of alpha- and beta-tubulin heterodimers. Microtubules grow by the addition of GTP-tubulin dimers to the microtubule end, where a stabilizing cap forms. Below the cap, tubulin dimers are in GDP-bound state, owing to GTPase activity of alpha-tubulin. This chain is Tubulin alpha chain (TUB-A), found in Pneumocystis carinii.